We begin with the raw amino-acid sequence, 276 residues long: Orotidine 5'-phosphate decarboxylase (276 aa).

The active-site Proton donor is the K96.

It belongs to the OMP decarboxylase family. Type 2 subfamily.

It carries out the reaction orotidine 5'-phosphate + H(+) = UMP + CO2. The protein operates within pyrimidine metabolism; UMP biosynthesis via de novo pathway; UMP from orotate: step 2/2. The chain is Orotidine 5'-phosphate decarboxylase from Porphyromonas gingivalis (strain ATCC BAA-308 / W83).